A 505-amino-acid polypeptide reads, in one-letter code: Neuronal acetylcholine receptor subunit alpha-3 (505 aa).

An N-terminal signal peptide occupies residues 1–31 (MGSGPLSLPLALSPPRLLLLLLLSLLPVARA). Residues 32-250 (SEAEHRLFER…PLFYTINLII (219 aa)) lie on the Extracellular side of the membrane. N-linked (GlcNAc...) asparagine glycosylation is found at Asn-55 and Asn-172. Intrachain disulfides connect Cys-159–Cys-173 and Cys-223–Cys-224. A helical membrane pass occupies residues 251–266 (PCLLISFLTVLVFYLP). The Cytoplasmic segment spans residues 267–268 (SD). The helical transmembrane segment at 269–285 (CGEKVTLCISVLLSLTV) threads the bilayer. Topologically, residues 286–307 (FLLVITETIPSTSLVIPLIGEY) are extracellular. A helical membrane pass occupies residues 308–326 (LLFTMIFVTLSIVITVFVL). The Cytoplasmic portion of the chain corresponds to 327–474 (NVHYRTPTTH…QDDWKYVAMV (148 aa)). Residues Ser-413 and Ser-416 each carry the phosphoserine modification. Residues 475-493 (IDRIFLWVFTLVCILGTAG) form a helical membrane-spanning segment. Topologically, residues 494-505 (LFLQPLMAREDA) are extracellular.

Belongs to the ligand-gated ion channel (TC 1.A.9) family. Acetylcholine receptor (TC 1.A.9.1) subfamily. Alpha-3/CHRNA3 sub-subfamily. Neuronal AChR is composed of two different types of subunits: alpha and beta. CHRNA3/Alpha-3 subunit can be combined to CHRNA5/alpha-5, CHRNB2/beta-2 CHRNB3/beta-3 or CHRNB4/beta-4 to give rise to functional receptors. Forms stoichiometries such as (CHRNA3)2:(CHRNB4)3 or (CHRNA3:CHRNB4)2:CHRNB3. Part of a complex composed of STUB1/CHIP, VCP/p97, CHRNA3, and UBXN2A that modulates the ubiquitination and endoplasmic reticulum-associated degradation (ERAD) of CHRNA3. Within the complex UBXN2A acts as a scaffold protein required for the interaction of CHRNA3 with VCP/p97, this interaction also inhibits CHRNA3 ubiquitination by STUB1/CHIP and subsequently ERAD. Interacts with UBXN2A (via SEP domain), the interaction is required for the interaction of CHRNA3 in the STUB1:VCP:UBXN2A complex. Interacts with RIC3; which is required for proper folding and assembly. Interacts with LYPD6. Ubiquitinated; by STUB1/CHIP and thereafter degraded by the 26S proteosome complex.

It localises to the synaptic cell membrane. It is found in the cell membrane. Its subcellular location is the endoplasmic reticulum. The protein localises to the golgi apparatus. It catalyses the reaction Ca(2+)(in) = Ca(2+)(out). The catalysed reaction is K(+)(in) = K(+)(out). It carries out the reaction Na(+)(in) = Na(+)(out). With respect to regulation, activated by a myriad of ligands such as acetylcholine, cytisine, nicotine, choline and epibatidine. The heteropentamer CHRNA3:CHRNB2 activity is blocked by alpha-conotoxins ImI, ImII, PnIA, GID and MII. The heteropentamer CHRNA3:CHRNB4 activity is blocked by the alpha-conotoxin ImI and AuIB. In terms of biological role, component of neuronal acetylcholine receptors (nAChRs) that function as pentameric, ligand-gated cation channels with high calcium permeability among other activities. nAChRs are excitatory neurotrasnmitter receptors formed by a collection of nAChR subunits known to mediate synaptic transmission in the nervous system and the neuromuscular junction. Each nAchR subunit confers differential attributes to channel properties, including activation, deactivation and desensitization kinetics, pH sensitivity, cation permeability, and binding to allosteric modulators. CHRNA3 forms heteropentameric neuronal acetylcholine receptors with CHRNB2 and CHRNB4, with CHRNA5, and CHRNB3 as accesory subunits. CHRNA3:CHRNB4 being predominant in neurons of the autonomic ganglia, it is known as ganglionic nicotinic receptor. CHRNA3:CHRNB4 or CHRNA3:CHRNA5:CHRNB4 play also an important role in the habenulo-interpeduncular tract, modulating the mesolimbic dopamine system and affecting reward circuits and addiction. Hypothalamic CHRNA3:CHRNB4 nAChR activation by nicotine leads to activation of POMC neurons and a decrease in food intake. Also expressed in the urothelium where it modulates reflex bladder activity by increasing intracellular calcium through extracellular influx and basal ATP release. This Homo sapiens (Human) protein is Neuronal acetylcholine receptor subunit alpha-3.